Consider the following 659-residue polypeptide: Siderophore transporter fer7 (659 aa).

The disordered stretch occupies residues 1-62 (MSNQAQDQPE…ADASSAREGQ (62 aa)). Polar residues predominate over residues 31–41 (QSVSAHGNTSL). Asn38 carries N-linked (GlcNAc...) asparagine glycosylation. A compositionally biased stretch (basic and acidic residues) spans 42 to 54 (NKKDRVSAVRDAD). 8 helical membrane-spanning segments follow: residues 79-99 (NSPI…CFAL), 121-141 (LFGV…PFIA), 150-170 (QTAY…VASA), 208-228 (GVVT…GNLI), 245-265 (GMFA…LMYV), 316-336 (LVGL…FSIY), 348-368 (IIAM…WEIL), and 379-399 (VWYN…FMGG). Asn415 is a glycosylation site (N-linked (GlcNAc...) asparagine). Helical transmembrane passes span 424–444 (VVNA…GFYL) and 451–471 (KFLQ…YLYG). Asn475 carries N-linked (GlcNAc...) asparagine glycosylation. A run of 3 helical transmembrane segments spans residues 478–498 (TMVV…SVVG), 528–548 (AIGS…YLAA), and 590–610 (PIFI…LLMP).

The protein belongs to the major facilitator superfamily.

The protein localises to the membrane. Functionally, siderophore transporter; part of the gene cluster that mediates the biosynthesis of siderophore ferrichrome A which is contributing to organismal virulence. The polypeptide is Siderophore transporter fer7 (Mycosarcoma maydis (Corn smut fungus)).